A 180-amino-acid chain; its full sequence is Large ribosomal subunit protein uL5 (180 aa).

It belongs to the universal ribosomal protein uL5 family. Part of the 50S ribosomal subunit; part of the 5S rRNA/L5/L18/L25 subcomplex. Contacts the 5S rRNA and the P site tRNA. Forms a bridge to the 30S subunit in the 70S ribosome.

Functionally, this is one of the proteins that bind and probably mediate the attachment of the 5S RNA into the large ribosomal subunit, where it forms part of the central protuberance. In the 70S ribosome it contacts protein S13 of the 30S subunit (bridge B1b), connecting the 2 subunits; this bridge is implicated in subunit movement. Contacts the P site tRNA; the 5S rRNA and some of its associated proteins might help stabilize positioning of ribosome-bound tRNAs. The protein is Large ribosomal subunit protein uL5 of Moorella thermoacetica (strain ATCC 39073 / JCM 9320).